A 258-amino-acid chain; its full sequence is Large ribosomal subunit protein bL21 (258 aa).

Over residues 140–159 (KAKDAKDEAPKAAPKAEKKK) the composition is skewed to basic and acidic residues. A disordered region spans residues 140–181 (KAKDAKDEAPKAAPKAEKKKAAPKKAKAEAAPAAADEGTRPA).

This sequence belongs to the bacterial ribosomal protein bL21 family. Part of the 50S ribosomal subunit. Contacts protein L20.

In terms of biological role, this protein binds to 23S rRNA in the presence of protein L20. The sequence is that of Large ribosomal subunit protein bL21 from Jannaschia sp. (strain CCS1).